Here is a 509-residue protein sequence, read N- to C-terminus: Aspartyl/glutamyl-tRNA(Asn/Gln) amidotransferase subunit B (509 aa).

The protein belongs to the GatB/GatE family. GatB subfamily. In terms of assembly, heterotrimer of A, B and C subunits.

It catalyses the reaction L-glutamyl-tRNA(Gln) + L-glutamine + ATP + H2O = L-glutaminyl-tRNA(Gln) + L-glutamate + ADP + phosphate + H(+). The catalysed reaction is L-aspartyl-tRNA(Asn) + L-glutamine + ATP + H2O = L-asparaginyl-tRNA(Asn) + L-glutamate + ADP + phosphate + 2 H(+). Its function is as follows. Allows the formation of correctly charged Asn-tRNA(Asn) or Gln-tRNA(Gln) through the transamidation of misacylated Asp-tRNA(Asn) or Glu-tRNA(Gln) in organisms which lack either or both of asparaginyl-tRNA or glutaminyl-tRNA synthetases. The reaction takes place in the presence of glutamine and ATP through an activated phospho-Asp-tRNA(Asn) or phospho-Glu-tRNA(Gln). This is Aspartyl/glutamyl-tRNA(Asn/Gln) amidotransferase subunit B from Mycobacterium leprae (strain Br4923).